The sequence spans 151 residues: MSTPDNRSVNFFSLFRRGQHYAKTWPMEKRLAPVFVENRVIRMTRYAIRFMPPIAVFTLCWQIALGGQLGPAVATALFALSLPMQGMWWLGKRSVTPLPPSILNWFYEVRGKLQEAGQALSPVEGKPDYQALADTLKRAFKQLDKTFLDDL.

The next 2 membrane-spanning stretches (helical) occupy residues tyrosine 46 to leucine 65 and leucine 69 to glycine 91.

Belongs to the UPF0208 family.

The protein localises to the cell inner membrane. This Citrobacter koseri (strain ATCC BAA-895 / CDC 4225-83 / SGSC4696) protein is UPF0208 membrane protein CKO_00500.